The primary structure comprises 474 residues: Hydrogenobyrinate a,c-diamide synthase (474 aa).

Residues 269–459 (VVAVAGGQAF…LHTHWAGCPQ (191 aa)) form the GATase cobBQ-type domain. Cys-352 functions as the Nucleophile in the catalytic mechanism.

The protein belongs to the CobB/CbiA family. The cofactor is Mg(2+).

The catalysed reaction is hydrogenobyrinate + 2 L-glutamine + 2 ATP + 2 H2O = hydrogenobyrinate a,c-diamide + 2 L-glutamate + 2 ADP + 2 phosphate + 2 H(+). It participates in cofactor biosynthesis; adenosylcobalamin biosynthesis; cob(II)yrinate a,c-diamide from precorrin-2 (aerobic route): step 9/10. Its function is as follows. Catalyzes the ATP-dependent amidation of the two carboxylate groups at positions a and c of hydrogenobyrinate, using either L-glutamine or ammonia as the nitrogen source. In Thermobifida fusca (strain YX), this protein is Hydrogenobyrinate a,c-diamide synthase.